A 252-amino-acid polypeptide reads, in one-letter code: Biosynthetic peptidoglycan transglycosylase (252 aa).

A helical transmembrane segment spans residues 23–43 (IGFLLGCIVAGVVAMQVYFFL).

It belongs to the glycosyltransferase 51 family.

It is found in the cell inner membrane. It catalyses the reaction [GlcNAc-(1-&gt;4)-Mur2Ac(oyl-L-Ala-gamma-D-Glu-L-Lys-D-Ala-D-Ala)](n)-di-trans,octa-cis-undecaprenyl diphosphate + beta-D-GlcNAc-(1-&gt;4)-Mur2Ac(oyl-L-Ala-gamma-D-Glu-L-Lys-D-Ala-D-Ala)-di-trans,octa-cis-undecaprenyl diphosphate = [GlcNAc-(1-&gt;4)-Mur2Ac(oyl-L-Ala-gamma-D-Glu-L-Lys-D-Ala-D-Ala)](n+1)-di-trans,octa-cis-undecaprenyl diphosphate + di-trans,octa-cis-undecaprenyl diphosphate + H(+). Its pathway is cell wall biogenesis; peptidoglycan biosynthesis. Its function is as follows. Peptidoglycan polymerase that catalyzes glycan chain elongation from lipid-linked precursors. The chain is Biosynthetic peptidoglycan transglycosylase from Cupriavidus pinatubonensis (strain JMP 134 / LMG 1197) (Cupriavidus necator (strain JMP 134)).